The chain runs to 601 residues: MIVPDLVADAMTAGPPAAKSGDGATMFGQVSDLGPGTVLAVETARDGVPTAWIAPTSLRAVVGMLREPAAALRMLFDLTAIDERQRAHRVGQPDCAFTLVCHFMALGGAGDALRLKVPLPAEAPRVPSIADFWPNANWYEREVWDLFGITFEGHPFLRRILTPPTWTGHPLRKDHYARATEMPPYSLTEDQEMAEQQALRFDPGAWGMARHSAHSDFMFLNLGPNHPSVHGVFRIVLQLEGERIVDAVPDIGFHHRGAEKMGERQSWHSFIPYTDRVDYLGGVMNNFPYVMAVEKLAGITVPPRAQMIRVMLAELFRVASHLVFYGTMTQDVGQLSPVFYMFSDRERVFEIIEAICGFRMHPAWFRIGGVAMDLPRGWDGLIRDFLDYLPPRLDEYEKMVMRNPIFRARTIGVGAYDVSEAIAWGVTGPGLRACGLEWDLRRKVPYSGYDQLEFDIPTAQNGDCYDRVRVHIAEIRQSLRIIRQCLDGMPAGAIKAEHRLTTPPPRARTMHDIETLIHHFLSVSWGPVIPPGEAHACVEATKGLNSYHLISDGGTMSYRTRIRTPSFPHLQMIPLISRGGMIADLIAIIGSIDFVMADVDR.

Residues 1–192 (MIVPDLVADA…PPYSLTEDQE (192 aa)) are NADH dehydrogenase I subunit C. Residues 216 to 601 (DFMFLNLGPN…IDFVMADVDR (386 aa)) are NADH dehydrogenase I subunit D.

This sequence in the N-terminal section; belongs to the complex I 30 kDa subunit family. It in the C-terminal section; belongs to the complex I 49 kDa subunit family. In terms of assembly, NDH-1 is composed of 13 different subunits. Subunits NuoB, CD, E, F, and G constitute the peripheral sector of the complex.

It is found in the cell inner membrane. It catalyses the reaction a quinone + NADH + 5 H(+)(in) = a quinol + NAD(+) + 4 H(+)(out). Its function is as follows. NDH-1 shuttles electrons from NADH, via FMN and iron-sulfur (Fe-S) centers, to quinones in the respiratory chain. The immediate electron acceptor for the enzyme in this species is believed to be ubiquinone. Couples the redox reaction to proton translocation (for every two electrons transferred, four hydrogen ions are translocated across the cytoplasmic membrane), and thus conserves the redox energy in a proton gradient. This chain is NADH-quinone oxidoreductase subunit C/D, found in Gluconacetobacter diazotrophicus (strain ATCC 49037 / DSM 5601 / CCUG 37298 / CIP 103539 / LMG 7603 / PAl5).